Consider the following 858-residue polypeptide: Rho GTPase-activating protein 17 (858 aa).

The region spanning 14-246 (QTVGRAEKTE…MRAHQDKWAE (233 aa)) is the BAR domain. The region spanning 252–442 (TPLEEHLKRS…PIIQHADWFF (191 aa)) is the Rho-GAP domain. Polar residues predominate over residues 459 to 475 (TPNSNHSSHTGNDSDSG). The segment at 459-482 (TPNSNHSSHTGNDSDSGTLERKRP) is disordered. S484 carries the phosphoserine modification. Residues 516–823 (RKHISPAFQP…VTDTNSRVSE (308 aa)) are disordered. Polar residues predominate over residues 543-552 (PSQSSRADSN). Residues 553–563 (SVGGPVPSSSG) are compositionally biased toward low complexity. S575 carries the phosphoserine modification. A compositionally biased stretch (polar residues) spans 592–617 (RNSNQITTVPNQAQTGGNSHQLSVGT). Positions 637-650 (APAPPKPGNPPPGH) are enriched in pro residues. Low complexity predominate over residues 653-702 (GQSSPGTGTSPKPSTRSPSPPQQQQQQQQQQQQQQQQQQQQQQQQQQQQQ). Residues S710 and S712 each carry the phosphoserine modification. Composition is skewed to pro residues over residues 716-729 (IQAPNHPPPQPPTQ) and 738-756 (EPGPTPPQTPTPPSTPPPA). Phosphothreonine occurs at positions 742, 746, and 748. The short motif at 742-755 (TPPQTPTPPSTPPP) is the SH3-binding element. S751 is subject to Phosphoserine. T752 is modified (phosphothreonine). The span at 757–769 (KQNSSQSETTQLH) shows a compositional bias: polar residues. The segment covering 784–794 (RPSVPPPPNPP) has biased composition (pro residues). Over residues 806 to 823 (SVPTASRIVTDTNSRVSE) the composition is skewed to polar residues.

In terms of assembly, component of a complex whose core is composed of ARHGAP17, AMOT, PALS1, PATJ and PARD3/PAR3. Interacts with NHERF1, FNBP1, TRIP10, CAPZA (CAPZA1, CAPZA2 or CAPZA3), CAPZB, CD2AP and SH3KBP1/CIN85. Highly expressed in brain; neuron-specific (at protein level). Isoform 2, isoform 3 and isoform 4 are predominantly expressed in neuronal tissues and correlate well with the differentiation of neurons, while isoform 1 is strongly expressed in embryonic brain.

Its subcellular location is the membrane. It localises to the cytoplasm. The protein localises to the cell junction. The protein resides in the tight junction. In terms of biological role, rho GTPase-activating protein involved in the maintenance of tight junction by regulating the activity of CDC42, thereby playing a central role in apical polarity of epithelial cells. Specifically acts as a GTPase activator for the CDC42 GTPase by converting it to an inactive GDP-bound state. The complex formed with AMOT acts by regulating the uptake of polarity proteins at tight junctions, possibly by deciding whether tight junction transmembrane proteins are recycled back to the plasma membrane or sent elsewhere. Participates in the Ca(2+)-dependent regulation of exocytosis, possibly by catalyzing GTPase activity of Rho family proteins and by inducing the reorganization of the cortical actin filaments. Acts as a GTPase activator in vitro for RAC1. This is Rho GTPase-activating protein 17 (Arhgap17) from Rattus norvegicus (Rat).